The chain runs to 642 residues: Palmitoyltransferase akr1 (642 aa).

6 ANK repeats span residues 1–29, 33–62, 67–96, 100–129, 133–162, and 166–196; these read MGSL…DVNA, GGAT…DVNA, LQAA…DPLL, QGFN…SVDL, QQHT…DVLA, and DKMT…PCTA. The Cytoplasmic segment spans residues 1–256; sequence MGSLFLAASQ…SKFQFSQKTF (256 aa). Helical transmembrane passes span 257–277 and 278–298; these read IIFC…IMSI and CPMV…FKYI. Residues 299–316 are Cytoplasmic-facing; it reads TTCIHANIDIVHFYLETP. A helical transmembrane segment spans residues 317-337; it reads FLAGIFSSIFFWVWCHSLLYI. Residues 338 to 343 lie on the Lumenal side of the membrane; that stretch reads VPKTLP. A helical membrane pass occupies residues 344 to 364; the sequence is IKPLSSLLFVLISFTCIGLYV. The Cytoplasmic segment spans residues 365–444; sequence RTAFQNPGYV…NCVGARNHRT (80 aa). In terms of domain architecture, DHHC spans 400-450; it reads HYCLKCFQVKPPRSYHCGACKRCINRYDHHCPWTGNCVGARNHRTFLLFVF. The active-site S-palmitoyl cysteine intermediate is the cysteine 430. Residues 445–465 traverse the membrane as a helical segment; sequence FLLFVFTLSTLIPIYFYVAFY. Residues 466 to 496 lie on the Lumenal side of the membrane; the sequence is YLQNIPIQKKYESYRCLFISGTICQWSLKDM. The chain crosses the membrane as a helical span at residues 497-517; it reads FVLVASLTLFVNWCWVVVLAF. Residues 518 to 642 lie on the Cytoplasmic side of the membrane; that stretch reads TQICQVAHNV…GRQDEATRHV (125 aa).

Belongs to the DHHC palmitoyltransferase family. AKR/ZDHHC17 subfamily.

It is found in the early endosome membrane. The protein localises to the golgi apparatus membrane. The catalysed reaction is L-cysteinyl-[protein] + hexadecanoyl-CoA = S-hexadecanoyl-L-cysteinyl-[protein] + CoA. In terms of biological role, palmitoyltransferase specific for casein kinase 1. This chain is Palmitoyltransferase akr1 (akr1), found in Schizosaccharomyces pombe (strain 972 / ATCC 24843) (Fission yeast).